Consider the following 627-residue polypeptide: Carene synthase, chloroplastic (627 aa).

The N-terminal 36 residues, methionine 1–valine 36, are a transit peptide targeting the chloroplast. 3 residues coordinate Mg(2+): aspartate 378, aspartate 382, and aspartate 530. The short motif at aspartate 378 to aspartate 382 is the DDXXD motif element.

It belongs to the terpene synthase family. Tpsd subfamily. The cofactor is Mg(2+). Mn(2+) serves as cofactor.

It localises to the plastid. The protein resides in the chloroplast. It catalyses the reaction (2E)-geranyl diphosphate = (+)-car-3-ene + diphosphate. It participates in terpene metabolism; oleoresin biosynthesis. Its function is as follows. Terpene synthase (TPS) involved in defensive oleoresin formation in conifers in response to insect attack or other injury. The sequence is that of Carene synthase, chloroplastic (3CAR) from Picea glauca (White spruce).